A 273-amino-acid chain; its full sequence is Shikimate dehydrogenase (NADP(+)) (273 aa).

Shikimate is bound by residues 15 to 17 (SLS) and T62. Residue K66 is the Proton acceptor of the active site. Position 78 (E78) interacts with NADP(+). Shikimate is bound by residues N87 and D102. Residues 126 to 130 (GAGGA), 150 to 155 (NRTIEK), and I217 contribute to the NADP(+) site. Shikimate is bound at residue Y219. G240 contacts NADP(+).

This sequence belongs to the shikimate dehydrogenase family. As to quaternary structure, homodimer.

It carries out the reaction shikimate + NADP(+) = 3-dehydroshikimate + NADPH + H(+). It functions in the pathway metabolic intermediate biosynthesis; chorismate biosynthesis; chorismate from D-erythrose 4-phosphate and phosphoenolpyruvate: step 4/7. Involved in the biosynthesis of the chorismate, which leads to the biosynthesis of aromatic amino acids. Catalyzes the reversible NADPH linked reduction of 3-dehydroshikimate (DHSA) to yield shikimate (SA). The chain is Shikimate dehydrogenase (NADP(+)) from Nitrosopumilus maritimus (strain SCM1).